The primary structure comprises 148 residues: Putative nickel-responsive regulator (148 aa).

The Ni(2+) site is built by H88, H99, H101, and C107.

Belongs to the transcriptional regulatory CopG/NikR family. It depends on Ni(2+) as a cofactor.

Functionally, transcriptional regulator. The sequence is that of Putative nickel-responsive regulator from Helicobacter pylori (strain G27).